The following is a 1079-amino-acid chain: Psi-producing oxygenase A (1079 aa).

The linoleate 8R-lipoxygenase stretch occupies residues Thr105–Val446. A heme b-binding site is contributed by His202. Residue Tyr374 is part of the active site. Residue His377 coordinates heme b. A 9,12-octadecadienoate 8-hydroperoxide 8R-isomerase region spans residues Gln654–Glu1079.

Belongs to the peroxidase family. Homotetramer. Heme b is required as a cofactor.

The catalysed reaction is (9Z,12Z)-octadecadienoate + O2 = (8R,9Z,12Z)-8-hydroperoxyoctadeca-9,12-dienoate. The enzyme catalyses (8R,9Z,12Z)-8-hydroperoxyoctadeca-9,12-dienoate = (5S,8R,9Z,12Z)-5,8-dihydroxyoctadeca-9,12-dienoate. In terms of biological role, bifunctional heme-containing enzyme that oxidizes linoleic acid to (8R,9Z,12Z)-8-hydroperoxyoctadeca-9,12-dienoate (within the N-terminal heme peroxidase domain), which is subsequently isomerized to (5S,8R,9Z,12Z)-5,8-dihydroxyoctadeca-9,12-dienoate (within the C-terminal P450 heme thiolate domain). Oxidized unsaturated fatty acids, so-called oxylipins, derived from endogenous fatty acids, influence the development of the asexual conidiophores and sexual cleistothecia and regulate the secondary metabolism. These substances were collectively named psi factors and are primarily a mixture of hydroxylated oleic, linoleic and alpha-linolenic acids. They are termed psi-beta, psi-alpha, and psi-gamma, respectively. Oxylipins may also serve as activators of mammalian immune responses contributing to enhanced resistance to opportunistic fungi and as factors that modulate fungal development contributing to resistance to host defenses. In Aspergillus fumigatus (strain ATCC MYA-4609 / CBS 101355 / FGSC A1100 / Af293) (Neosartorya fumigata), this protein is Psi-producing oxygenase A (ppoA).